The primary structure comprises 476 residues: Bifunctional protein HldE (476 aa).

The interval 1–319 (MKVTLPAFEK…EALKSHQGES (319 aa)) is ribokinase. Residue 195–198 (NMSE) participates in ATP binding. D264 is a catalytic residue. Residues 345 to 476 (MTNGCFDILH…AIIQNIMSRH (132 aa)) form a cytidylyltransferase region.

It in the N-terminal section; belongs to the carbohydrate kinase PfkB family. In the C-terminal section; belongs to the cytidylyltransferase family. In terms of assembly, homodimer.

It carries out the reaction D-glycero-beta-D-manno-heptose 7-phosphate + ATP = D-glycero-beta-D-manno-heptose 1,7-bisphosphate + ADP + H(+). The catalysed reaction is D-glycero-beta-D-manno-heptose 1-phosphate + ATP + H(+) = ADP-D-glycero-beta-D-manno-heptose + diphosphate. The protein operates within nucleotide-sugar biosynthesis; ADP-L-glycero-beta-D-manno-heptose biosynthesis; ADP-L-glycero-beta-D-manno-heptose from D-glycero-beta-D-manno-heptose 7-phosphate: step 1/4. It participates in nucleotide-sugar biosynthesis; ADP-L-glycero-beta-D-manno-heptose biosynthesis; ADP-L-glycero-beta-D-manno-heptose from D-glycero-beta-D-manno-heptose 7-phosphate: step 3/4. Functionally, catalyzes the phosphorylation of D-glycero-D-manno-heptose 7-phosphate at the C-1 position to selectively form D-glycero-beta-D-manno-heptose-1,7-bisphosphate. In terms of biological role, catalyzes the ADP transfer from ATP to D-glycero-beta-D-manno-heptose 1-phosphate, yielding ADP-D-glycero-beta-D-manno-heptose. This chain is Bifunctional protein HldE, found in Shewanella amazonensis (strain ATCC BAA-1098 / SB2B).